The chain runs to 93 residues: Large ribosomal subunit protein uL23cz/uL23cy (93 aa).

The protein belongs to the universal ribosomal protein uL23 family. As to quaternary structure, part of the 50S ribosomal subunit.

It localises to the plastid. The protein localises to the chloroplast. Functionally, binds to 23S rRNA. The protein is Large ribosomal subunit protein uL23cz/uL23cy (rpl23-A) of Lactuca sativa (Garden lettuce).